The chain runs to 46 residues: Photosystem II reaction center protein Psb30 (46 aa).

M1 bears the N-formylmethionine mark. Over M1–A20 the chain is Lumenal. A helical membrane pass occupies residues Q21 to L38. Over L39–L46 the chain is Cytoplasmic.

This sequence belongs to the Psb30/Ycf12 family. As to quaternary structure, PSII is composed of 1 copy each of membrane proteins PsbA, PsbB, PsbC, PsbD, PsbE, PsbF, PsbH, PsbI, PsbJ, PsbK, PsbL, PsbM, PsbT, PsbX, PsbY, PsbZ, Psb30/Ycf12, peripheral proteins PsbO, CyanoQ (PsbQ), PsbU, PsbV and a large number of cofactors. It forms dimeric complexes. Part of a photosystem II (PSII) assembly intermediate complex PSII-I; crystallized from a strain deleted of psbJ, it forms monomeric PSII before addition of the oxygen evolving complex. PSII-I includes 3 assembly factors not found in mature PSII (Psb27, Psb28 and Psb34). The cofactor is PSII binds multiple chlorophylls, carotenoids and specific lipids..

The protein resides in the cellular thylakoid membrane. Functionally, a core subunit of photosystem II (PSII). PSII is a light-driven water plastoquinone oxidoreductase, using light energy to abstract electrons from H(2)O, generating a proton gradient subsequently used for ATP formation. Helps stabilize PSII. The sequence is that of Photosystem II reaction center protein Psb30 from Thermosynechococcus vestitus (strain NIES-2133 / IAM M-273 / BP-1).